A 293-amino-acid polypeptide reads, in one-letter code: Ribonuclease HIII (293 aa).

Residues 78 to 293 enclose the RNase H type-2 domain; that stretch reads LPLIGTDEVG…TEKAKKRLER (216 aa). A divalent metal cation-binding residues include aspartate 84, glutamate 85, and aspartate 187.

Belongs to the RNase HII family. RnhC subfamily. Mn(2+) serves as cofactor. Mg(2+) is required as a cofactor.

It localises to the cytoplasm. It catalyses the reaction Endonucleolytic cleavage to 5'-phosphomonoester.. In terms of biological role, endonuclease that specifically degrades the RNA of RNA-DNA hybrids. The polypeptide is Ribonuclease HIII (Streptococcus pneumoniae (strain Taiwan19F-14)).